Consider the following 256-residue polypeptide: Gramicidin S biosynthesis protein GrsT (256 aa).

Residue Ser-95 is part of the active site.

It belongs to the thioesterase family.

The protein operates within antibiotic biosynthesis; gramicidin S biosynthesis. Functionally, probable thioesterase involved in the biosynthesis of gramicidin S. In Aneurinibacillus migulanus (Bacillus migulanus), this protein is Gramicidin S biosynthesis protein GrsT (grsT).